A 481-amino-acid chain; its full sequence is Glycogen synthase (481 aa).

Residue K16 coordinates ADP-alpha-D-glucose.

This sequence belongs to the glycosyltransferase 1 family. Bacterial/plant glycogen synthase subfamily.

The enzyme catalyses [(1-&gt;4)-alpha-D-glucosyl](n) + ADP-alpha-D-glucose = [(1-&gt;4)-alpha-D-glucosyl](n+1) + ADP + H(+). Its pathway is glycan biosynthesis; glycogen biosynthesis. Its function is as follows. Synthesizes alpha-1,4-glucan chains using ADP-glucose. The sequence is that of Glycogen synthase from Cellvibrio japonicus (strain Ueda107) (Pseudomonas fluorescens subsp. cellulosa).